We begin with the raw amino-acid sequence, 73 residues long: MKEGIHPKYEDITATCSCGNVIKTRSTIGHDLQLDVCSQCHPFYTGKQKVMDTGGRIDRFQKRFGSRIGGKKG.

The Zn(2+) site is built by Cys-16, Cys-18, Cys-37, and Cys-40.

It belongs to the bacterial ribosomal protein bL31 family. Type A subfamily. In terms of assembly, part of the 50S ribosomal subunit. Zn(2+) is required as a cofactor.

Its function is as follows. Binds the 23S rRNA. This is Large ribosomal subunit protein bL31 from Marinobacter nauticus (strain ATCC 700491 / DSM 11845 / VT8) (Marinobacter aquaeolei).